The sequence spans 396 residues: Methionine import ATP-binding protein MetN 2 (396 aa).

Residues 41-280 form the ABC transporter domain; it reads VSFELVGKVF…PRHGATRALL (240 aa). Residue 77–84 coordinates ATP; it reads GRSGAGKS.

Belongs to the ABC transporter superfamily. Methionine importer (TC 3.A.1.24) family. In terms of assembly, the complex is composed of two ATP-binding proteins (MetN), two transmembrane proteins (MetI) and a solute-binding protein (MetQ).

The protein resides in the cell inner membrane. It carries out the reaction L-methionine(out) + ATP + H2O = L-methionine(in) + ADP + phosphate + H(+). The catalysed reaction is D-methionine(out) + ATP + H2O = D-methionine(in) + ADP + phosphate + H(+). Functionally, part of the ABC transporter complex MetNIQ involved in methionine import. Responsible for energy coupling to the transport system. This Burkholderia pseudomallei (strain 1710b) protein is Methionine import ATP-binding protein MetN 2.